The sequence spans 179 residues: DELTA-actitoxin-Afr1a (179 aa).

Residues 1–29 form an N-terminal alpha-helix that contributes to the pore region; that stretch reads SADVAGAVIDGAGLGFDVLKTVLEALGNV. Position 31 (arginine 31) interacts with an N-(acyl)-sphingosylphosphocholine. The N-acetyl-D-glucosamine 6-sulfate site is built by tyrosine 51 and arginine 53. Residues arginine 53, serine 54, arginine 79, glycine 85, tyrosine 108, tyrosine 113, serine 114, tryptophan 116, tyrosine 133, tyrosine 137, tyrosine 138, arginine 144, and glycine 168 each contribute to the an N-(acyl)-sphingosylphosphocholine site. Residues 105–120 form a trp-rich region, which is important for the binding to lipid membrane region; sequence SVPYDYNWYSNWWNVR. Tyrosine 138 contributes to the N-acetyl-D-glucosamine 6-sulfate binding site. A Cell attachment site, crucial for protein stability motif is present at residues 144-146; the sequence is RGD.

This sequence belongs to the actinoporin family. Sea anemone subfamily. Octamer or nonamer in membranes. Monomer in the soluble state.

It is found in the secreted. Its subcellular location is the nematocyst. The protein resides in the target cell membrane. In terms of biological role, pore-forming toxin (PFT) that consists of a crown-shaped octamer or nonamer that forms cation-selective hydrophilic pores of about 1.5 nm (inside) and 13 nm (outside). It causes cardiac stimulation and cytolysis (EC(50)=1.6 nM on erythrocytes). Interestingly, the Phe-16 is crucial for hemolysis. Pore formation is a multi-step process that involves specific recognition of membrane sphingomyelin (but neither cholesterol nor phosphatidylcholine) using aromatic rich region and adjacent phosphocholine (POC) binding site, firm binding to the membrane (mainly driven by hydrophobic interactions) accompanied by the transfer of the N-terminal region to the lipid-water interface and finally pore formation after oligomerization of monomers. It is probable that a dimeric form is an assembly intermediate before the complete oligomerization. The formation of stable pores occurs only in vesicles composed of DOPC/SM (there is no oligomerization when the PFT is treated with vesicles of DOPC or SM alone). The transmembrane pore displays 8 lateral perforations, one at each subunit-subunit interface, partially occupied by the acyl-chain region of a bridging lipid. Each pore contains 24 lipid molecules, firmly bound to each subunit, that is, 3 lipids (L1, L2, L3, L4 and/or L5) are associated to each subunit. Lipid L1 bridges 2 subunits, whereas lipids L2 and L3 bind to sites at single subunit. This is DELTA-actitoxin-Afr1a from Actinia fragacea (Strawberry anemone).